A 115-amino-acid polypeptide reads, in one-letter code: Cytochrome c oxidase assembly protein COX16 homolog, mitochondrial (115 aa).

The Mitochondrial matrix segment spans residues 1–6; sequence MSRLKF. A helical transmembrane segment spans residues 7-29; sequence VRVGLPFFAIVLGSAYGLHFFQQ. Residues 30–115 lie on the Mitochondrial intermembrane side of the membrane; it reads VRFDFRKIKQ…RKVRELKSNV (86 aa).

It belongs to the COX16 family.

It localises to the mitochondrion inner membrane. Functionally, required for the assembly of the mitochondrial respiratory chain complex IV (CIV), also known as cytochrome c oxidase. This Caenorhabditis elegans protein is Cytochrome c oxidase assembly protein COX16 homolog, mitochondrial.